The primary structure comprises 160 residues: Cytochrome b6-f complex subunit 4 (160 aa).

Transmembrane regions (helical) follow at residues 36–56 (LLYM…GLAV), 95–115 (LLGI…PFIE), and 131–151 (AVFL…ALPI).

It belongs to the cytochrome b family. PetD subfamily. The 4 large subunits of the cytochrome b6-f complex are cytochrome b6, subunit IV (17 kDa polypeptide, PetD), cytochrome f and the Rieske protein, while the 4 small subunits are PetG, PetL, PetM and PetN. The complex functions as a dimer.

The protein resides in the cellular thylakoid membrane. Its function is as follows. Component of the cytochrome b6-f complex, which mediates electron transfer between photosystem II (PSII) and photosystem I (PSI), cyclic electron flow around PSI, and state transitions. The sequence is that of Cytochrome b6-f complex subunit 4 from Synechococcus elongatus (strain ATCC 33912 / PCC 7942 / FACHB-805) (Anacystis nidulans R2).